The primary structure comprises 76 residues: Omega-conotoxin-like TxO2 (76 aa).

An N-terminal signal peptide occupies residues 1–22 (MKLTCVVIVAVLFLTAWTFVTA). Residues 23–52 (APHSSNALENLYLKAHHEMNNPEDSELNKR) constitute a propeptide that is removed on maturation. Cystine bridges form between C53/C67, C60/C71, and C66/C75.

Belongs to the conotoxin O1 superfamily. Expressed by the venom duct.

Its subcellular location is the secreted. Functionally, omega-conotoxins act at presynaptic membranes, they bind and block voltage-gated calcium channels (Cav). The protein is Omega-conotoxin-like TxO2 of Conus textile (Cloth-of-gold cone).